The primary structure comprises 518 residues: ESX-3 secretion system ATPase EccB3 (518 aa).

The disordered stretch occupies residues 1-26; the sequence is MTGPVNPDDRRSFSSRTPVNENPDGV. Residues 71–91 form a helical membrane-spanning segment; sequence VLTGALILVTGLVGCFIFSLF.

It belongs to the EccB family. Part of the ESX-3 / type VII secretion system (T7SS), which is composed of cytosolic and membrane components. The ESX-3 membrane complex is composed of EccB3, EccC3, EccD3 and EccE3.

It localises to the cell inner membrane. Its function is as follows. An ATPase. Part of the ESX-3 specialized secretion system, which is required for siderophore-mediated iron acquisition and for the secretion of EsxH and EsxG. This chain is ESX-3 secretion system ATPase EccB3, found in Mycolicibacterium smegmatis (strain ATCC 700084 / mc(2)155) (Mycobacterium smegmatis).